The primary structure comprises 1005 residues: Negative regulator of pleiotropic drug resistance STB5 (1005 aa).

Residues 1-28 (MSGPDKGSDSGQTANDPKQKKARNGQME) are disordered. Residues 32–59 (CARCRKLKKKCPRQLPECSNCLKAREPC) constitute a DNA-binding region (zn(2)-C6 fungal-type). Disordered stretches follow at residues 129–151 (GGEQQYNNGPPISGIDGNDSINR), 666–693 (KGKSRSSKRFEKSKESDSDRGVTEEDVK), and 763–831 (TKPT…SSLR). A compositionally biased stretch (basic and acidic residues) spans 673–693 (KRFEKSKESDSDRGVTEEDVK). A compositionally biased stretch (polar residues) spans 763 to 773 (TKPTANIMNDQ). The span at 792-801 (EGPKSLKEGN) shows a compositional bias: basic and acidic residues.

The protein localises to the nucleus. In terms of biological role, transcription factor that negatively regulates pleiotropic drug resistance genes, including the ABC transporter genes CDR1, PDH1, and YOR1. This Candida glabrata (strain ATCC 2001 / BCRC 20586 / JCM 3761 / NBRC 0622 / NRRL Y-65 / CBS 138) (Yeast) protein is Negative regulator of pleiotropic drug resistance STB5.